The following is a 201-amino-acid chain: Twist-related protein 1 (201 aa).

Residues 1-18 (MMQDVSSSPVSPADDSLS) are compositionally biased toward low complexity. Residues 1-106 (MMQDVSSSPV…GGGSPQSYEE (106 aa)) form a disordered region. Over residues 34 to 43 (RGGRKRRSSR) the composition is skewed to basic residues. Composition is skewed to gly residues over residues 46-65 (AGGG…GGDE) and 80-100 (GCGG…GGGS). The region spanning 109-160 (TQRVMANVRERQRTQSLNEAFAALPKIIPTLPSDKLSKIQTLKLAARYIDFL) is the bHLH domain. A sufficient for transactivation activity region spans residues 162 to 190 (QVLQSDELDSKMASYVAHERLSYAFSVWR).

Efficient DNA binding requires dimerization with another bHLH protein. Homodimer or heterodimer with E proteins such as TCF3. ID1 binds preferentially to TCF3 but does not interact efficiently with TWIST1 so ID1 levels control the amount of TCF3 available to dimerize with TWIST and thus determine the type of dimer formed.

It is found in the nucleus. Its function is as follows. Acts as a transcriptional regulator. Inhibits myogenesis by sequestrating E proteins, inhibiting trans-activation by MEF2, and inhibiting DNA-binding by MYOD1 through physical interaction. This interaction probably involves the basic domains of both proteins. Also represses expression of pro-inflammatory cytokines such as TNFA and IL1B. Regulates cranial suture patterning and fusion. Activates transcription as a heterodimer with E proteins. Regulates gene expression differentially, depending on dimer composition. Homodimers induce expression of FGFR2 and POSTN while heterodimers repress FGFR2 and POSTN expression and induce THBS1 expression. Heterodimerization is also required for osteoblast differentiation. Represses the activity of the circadian transcriptional activator: NPAS2-BMAL1 heterodimer. The sequence is that of Twist-related protein 1 (TWIST1) from Pan troglodytes (Chimpanzee).